The following is a 311-amino-acid chain: Ribosomal RNA small subunit methyltransferase A (311 aa).

Asparagine 29, valine 31, glycine 56, glutamate 77, aspartate 107, and asparagine 126 together coordinate S-adenosyl-L-methionine.

This sequence belongs to the class I-like SAM-binding methyltransferase superfamily. rRNA adenine N(6)-methyltransferase family. RsmA subfamily.

The protein resides in the cytoplasm. It catalyses the reaction adenosine(1518)/adenosine(1519) in 16S rRNA + 4 S-adenosyl-L-methionine = N(6)-dimethyladenosine(1518)/N(6)-dimethyladenosine(1519) in 16S rRNA + 4 S-adenosyl-L-homocysteine + 4 H(+). In terms of biological role, specifically dimethylates two adjacent adenosines (A1518 and A1519) in the loop of a conserved hairpin near the 3'-end of 16S rRNA in the 30S particle. May play a critical role in biogenesis of 30S subunits. This Mycolicibacterium vanbaalenii (strain DSM 7251 / JCM 13017 / BCRC 16820 / KCTC 9966 / NRRL B-24157 / PYR-1) (Mycobacterium vanbaalenii) protein is Ribosomal RNA small subunit methyltransferase A.